A 110-amino-acid polypeptide reads, in one-letter code: MTSTTNTMCGSYYRNYNGGHGYGCCGYGGLGCGYGGCGYGCCGYGGLGFGYGGLDCGYGGLGCGYGSFCGCGYRGLDCGYGCGYGYVSHSFCGCGYRCGSGYGSSFGYYY.

The protein belongs to the KRTAP type 6 family. Interacts with hair keratins.

Its function is as follows. In the hair cortex, hair keratin intermediate filaments are embedded in an interfilamentous matrix, consisting of hair keratin-associated proteins (KRTAP), which are essential for the formation of a rigid and resistant hair shaft through their extensive disulfide bond cross-linking with abundant cysteine residues of hair keratins. The matrix proteins include the high-sulfur and high-glycine-tyrosine keratins. The sequence is that of Keratin-associated protein 6-3 from Homo sapiens (Human).